Consider the following 401-residue polypeptide: Adaptive-response sensory kinase SasA (401 aa).

A Histidine kinase domain is found at 175-400; that stretch reads MLVHDLRNPL…WFHFTLPVYP (226 aa). H178 is modified (phosphohistidine; by autocatalysis).

As to quaternary structure, homooligomerizes. Interacts with KaiC. Participates in the KaiABC clock complex, whose core is composed of a KaiC homohexamer, 6 KaiB and up to 6 KaiA dimers. SasA and KaiB(fs) compete to bind to KaiC.

It catalyses the reaction ATP + protein L-histidine = ADP + protein N-phospho-L-histidine.. Functionally, member of the two-component regulatory system SasA/RpaA involved in genome-wide circadian gene expression. One of several clock output pathways. Participates in the Kai clock protein complex, the main circadian regulator in cyanobacteria, via its interaction with KaiC. KaiC enhances the autophosphorylation activity of SasA, which then transfers its phosphate group to RpaA to activate it. In addition to its output function, recruits fold-shifted KaiB (KaiB(fs)) to KaiC to cooperatively form the KaiB(6):KaiC(6) complex (independent of SasA kinase activity). Required for robustness of the circadian rhythm of gene expression and is involved in clock output, also required for adaptation to light/dark cycles. The protein is Adaptive-response sensory kinase SasA of Nostoc sp. (strain PCC 7120 / SAG 25.82 / UTEX 2576).